The chain runs to 129 residues: Small ribosomal subunit protein uS8c (129 aa).

It belongs to the universal ribosomal protein uS8 family. In terms of assembly, part of the 30S ribosomal subunit.

Its subcellular location is the plastid. It localises to the chloroplast. In terms of biological role, one of the primary rRNA binding proteins, it binds directly to 16S rRNA central domain where it helps coordinate assembly of the platform of the 30S subunit. The sequence is that of Small ribosomal subunit protein uS8c (rps8) from Oltmannsiellopsis viridis (Marine flagellate).